The chain runs to 436 residues: GTPase Der (436 aa).

2 EngA-type G domains span residues proline 4–glutamate 167 and isoleucine 175–asparagine 351. Residues glycine 10 to serine 17, aspartate 57 to isoleucine 61, asparagine 119 to aspartate 122, glycine 181 to serine 188, aspartate 229 to methionine 233, and asparagine 294 to aspartate 297 each bind GTP. The KH-like domain occupies lysine 352–lysine 436.

This sequence belongs to the TRAFAC class TrmE-Era-EngA-EngB-Septin-like GTPase superfamily. EngA (Der) GTPase family. As to quaternary structure, associates with the 50S ribosomal subunit.

In terms of biological role, GTPase that plays an essential role in the late steps of ribosome biogenesis. This is GTPase Der from Streptococcus agalactiae serotype Ia (strain ATCC 27591 / A909 / CDC SS700).